The following is a 93-amino-acid chain: Alpha-defensin 24 (93 aa).

Residues 1-19 form the signal peptide; sequence MKTLILLSALVLLAFQVQA. Positions 20-58 are excised as a propeptide; the sequence is DPIQNTDEETKTEEQPGEEDQAVSVSFGDPEGASLQEES. A disordered region spans residues 23 to 54; it reads QNTDEETKTEEQPGEEDQAVSVSFGDPEGASL. Intrachain disulfides connect Cys-64-Cys-92, Cys-66-Cys-81, and Cys-71-Cys-91.

The protein belongs to the alpha-defensin family.

The protein localises to the secreted. Functionally, may have microbicidal activities. The protein is Alpha-defensin 24 (Defa24) of Mus musculus (Mouse).